The chain runs to 141 residues: Large ribosomal subunit protein uL16 (141 aa).

Belongs to the universal ribosomal protein uL16 family. As to quaternary structure, part of the 50S ribosomal subunit.

Binds 23S rRNA and is also seen to make contacts with the A and possibly P site tRNAs. This Campylobacter lari (strain RM2100 / D67 / ATCC BAA-1060) protein is Large ribosomal subunit protein uL16.